A 742-amino-acid polypeptide reads, in one-letter code: F-box only protein 30 (742 aa).

Residues 49 to 108 form a TRAF-type zinc finger; sequence EHRLLCPFERVPCLNSNFGCPFTLARNKVAEHLEMCPASVVCCTMEWNRWPVSYSDRKSY. A disordered region spans residues 214–242; the sequence is SLQGTTNEMDEESNRESSQDRNAKDQDHL. Basic and acidic residues predominate over residues 225–242; it reads ESNRESSQDRNAKDQDHL. Ser379 is modified (phosphoserine). One can recognise an F-box domain in the interval 607–653; it reads SDHLSSLPFEVLQHIAGFLDGFSLCQLACVSRLMRDICGSLLQSRGM.

Part of a SCF (SKP1-cullin-F-box) protein ligase complex. Interacts with SKP1, CUL1 and RBX1/ROC1. In terms of processing, auto-ubiquitinated. Post-translationally, may be neddylated. Neddylation may be required for E3 ligase activity.

Its pathway is protein modification; protein ubiquitination. In terms of biological role, substrate-recognition component of the SCF (SKP1-CUL1-F-box protein)-type E3 ubiquitin ligase complex. Required for muscle atrophy following denervation. This chain is F-box only protein 30 (Fbxo30), found in Rattus norvegicus (Rat).